A 411-amino-acid chain; its full sequence is Lycopene beta cyclase (411 aa).

An NAD(+)-binding site is contributed by 4–32 (ALVIGSGPAGLAIAAELAQRGLKVQGLSP).

The protein belongs to the lycopene cyclase family. Requires FAD as cofactor.

It catalyses the reaction a carotenoid psi-end group = a carotenoid beta-end derivative. The catalysed reaction is all-trans-lycopene = gamma-carotene. It carries out the reaction gamma-carotene = all-trans-beta-carotene. The enzyme catalyses all-trans-neurosporene = beta-zeacarotene. Its pathway is carotenoid biosynthesis; beta-carotene biosynthesis. The protein operates within carotenoid biosynthesis; beta-zeacarotene biosynthesis. With respect to regulation, inhibited by the bleaching herbicide 2-(4-methylphenoxy)triethylamine hydrochloride (MPTA). Catalyzes the double cyclization reaction which converts lycopene to beta-carotene. It also converts neurosporene to the monocyclic beta-zeacarotene but does not cyclize zeta-carotene. The polypeptide is Lycopene beta cyclase (Synechococcus elongatus (strain ATCC 33912 / PCC 7942 / FACHB-805) (Anacystis nidulans R2)).